A 370-amino-acid chain; its full sequence is 4-hydroxy-3-methylbut-2-en-1-yl diphosphate synthase (flavodoxin) (370 aa).

[4Fe-4S] cluster-binding residues include Cys-270, Cys-273, Cys-305, and Glu-312.

Belongs to the IspG family. [4Fe-4S] cluster is required as a cofactor.

The catalysed reaction is (2E)-4-hydroxy-3-methylbut-2-enyl diphosphate + oxidized [flavodoxin] + H2O + 2 H(+) = 2-C-methyl-D-erythritol 2,4-cyclic diphosphate + reduced [flavodoxin]. It functions in the pathway isoprenoid biosynthesis; isopentenyl diphosphate biosynthesis via DXP pathway; isopentenyl diphosphate from 1-deoxy-D-xylulose 5-phosphate: step 5/6. Its function is as follows. Converts 2C-methyl-D-erythritol 2,4-cyclodiphosphate (ME-2,4cPP) into 1-hydroxy-2-methyl-2-(E)-butenyl 4-diphosphate. The sequence is that of 4-hydroxy-3-methylbut-2-en-1-yl diphosphate synthase (flavodoxin) from Hamiltonella defensa subsp. Acyrthosiphon pisum (strain 5AT).